The sequence spans 108 residues: Con-Ins K1 (108 aa).

Residues methionine 1–glycine 24 form the signal peptide. A propeptide spanning residues serine 25 to threonine 28 is cleaved from the precursor. Intrachain disulfides connect cysteine 41–cysteine 90, cysteine 53–cysteine 103, and cysteine 89–cysteine 94. Glutamate 44 carries the post-translational modification 4-carboxyglutamate. Positions arginine 57–arginine 83 are cleaved as a propeptide — c peptide. Glutamate 87 is subject to 4-carboxyglutamate. Glutamine amide is present on glutamine 107.

Belongs to the insulin family. In terms of assembly, heterodimer of A and B chains; disulfide-linked. Expressed by the venom gland.

The protein resides in the secreted. This venom insulin, from a fish-hunting cone snail, facilitates prey capture by rapidly inducing hypoglycemic shock. It is one of the smallest known insulin found in nature and lacks the C-terminal segment of the B chain that, in human insulin, mediates engagement of the insulin receptor (INSR) and assembly of the hormone's hexameric storage form. Despite lacking this segment, it both binds and activates human insulin receptor (long isoform (HIR-B)) with a moderate potency (EC(50)=30.45 nM). In vivo, intraperitoneal injection of this peptide into zebrafish lowers blood glucose with a lower potency than human insulin. In addition, when applied to water, this peptide reduces overall locomotor activity of zebrafish larvae, observed as a significant decrease in the percentage of time spent swimming and movement frequency. When tested on a mouse model of diabetes, this insulin also lowers blood glucose with a 20-fold lower potency than human insulin. The protein is Con-Ins K1 of Conus kinoshitai (Kinoshita's cone).